A 339-amino-acid polypeptide reads, in one-letter code: Anthranilate phosphoribosyltransferase (339 aa).

5-phospho-alpha-D-ribose 1-diphosphate is bound by residues glycine 82, 85-86 (GD), threonine 90, 92-95 (NIST), and 110-118 (KHGNRAVSS). Glycine 82 contacts anthranilate. Serine 94 contributes to the Mg(2+) binding site. Positions 113 and 168 each coordinate anthranilate. 2 residues coordinate Mg(2+): aspartate 227 and glutamate 228.

This sequence belongs to the anthranilate phosphoribosyltransferase family. Homodimer. The cofactor is Mg(2+).

It carries out the reaction N-(5-phospho-beta-D-ribosyl)anthranilate + diphosphate = 5-phospho-alpha-D-ribose 1-diphosphate + anthranilate. Its pathway is amino-acid biosynthesis; L-tryptophan biosynthesis; L-tryptophan from chorismate: step 2/5. In terms of biological role, catalyzes the transfer of the phosphoribosyl group of 5-phosphorylribose-1-pyrophosphate (PRPP) to anthranilate to yield N-(5'-phosphoribosyl)-anthranilate (PRA). In Clostridium beijerinckii (strain ATCC 51743 / NCIMB 8052) (Clostridium acetobutylicum), this protein is Anthranilate phosphoribosyltransferase.